Here is a 48-residue protein sequence, read N- to C-terminus: Large ribosomal subunit protein bL34c (48 aa).

This sequence belongs to the bacterial ribosomal protein bL34 family.

Its subcellular location is the plastid. It localises to the chloroplast. The sequence is that of Large ribosomal subunit protein bL34c from Thalassiosira pseudonana (Marine diatom).